A 451-amino-acid polypeptide reads, in one-letter code: Phosphoglucosamine mutase (451 aa).

Residue Ser107 is the Phosphoserine intermediate of the active site. 4 residues coordinate Mg(2+): Ser107, Asp246, Asp248, and Asp250. Phosphoserine is present on Ser107.

It belongs to the phosphohexose mutase family. It depends on Mg(2+) as a cofactor. Post-translationally, activated by phosphorylation.

It carries out the reaction alpha-D-glucosamine 1-phosphate = D-glucosamine 6-phosphate. In terms of biological role, catalyzes the conversion of glucosamine-6-phosphate to glucosamine-1-phosphate. This chain is Phosphoglucosamine mutase, found in Azoarcus sp. (strain BH72).